Here is a 944-residue protein sequence, read N- to C-terminus: Calcium-transporting ATPase type 2C member 2 (944 aa).

Over 1-104 the chain is Cytoplasmic; that stretch reads MGRRLKFLQK…DNAEPVWKKY (104 aa). The interval 69–93 is interaction with ORAI1; that stretch reads VDLDSGLSEFAVAQRRLVHGWNEFV. Residues 105–125 form a helical membrane-spanning segment; it reads LDQFRNPLILLLLGSSVVSVL. Topologically, residues 126-127 are extracellular; sequence TK. Residues 128–148 traverse the membrane as a helical segment; sequence EYEDAVSIALAVLIVVTVGFI. Over 149–229 the chain is Cytoplasmic; the sequence is QEYRSEKSLE…EVEPCGKTDS (81 aa). Residues 230-250 form a helical membrane-spanning segment; the sequence is PLADGGDLSTLSNVVFMGTLV. Over 251–291 the chain is Extracellular; the sequence is QCGKGQGVVIGTGEQSQFGEVFKMMRAEETPKTPLQKSMDK. A Phosphothreonine modification is found at Thr262. The residue at position 266 (Ser266) is a Phosphoserine. Residues 292-312 form a helical membrane-spanning segment; the sequence is LGKQLTIFSFGIIGLLMLVGW. Residues 313–329 lie on the Cytoplasmic side of the membrane; sequence VQGKPFLSMFTVGVSLA. Ca(2+) contacts are provided by Val330, Ala331, Ile333, and Glu335. A helical transmembrane segment spans residues 330–350; that stretch reads VAAIPEGLPIVVMVTLVLGVL. The Extracellular portion of the chain corresponds to 351–748; the sequence is RMAKKRVIVK…IAALSLITLS (398 aa). Asp377 functions as the 4-aspartylphosphate intermediate in the catalytic mechanism. The Mg(2+) site is built by Asp672 and Asp676. A helical transmembrane segment spans residues 749 to 769; sequence TVCNLPSPLNAMQILWVNIIM. Positions 766 and 770 each coordinate Ca(2+). Over 770–802 the chain is Cytoplasmic; the sequence is DGPPAQSLGVEPVDRDALRRPPRSVGDTILNRA. The helical transmembrane segment at 803 to 823 threads the bilayer; sequence LILRVLMSAAVIIGGTLFIFW. Over 824-835 the chain is Extracellular; that stretch reads REIPANGTSTPR. Residues 836 to 853 traverse the membrane as a helical segment; sequence TTTMAFTCFVFFDLFNAL. Residues 854–872 lie on the Cytoplasmic side of the membrane; the sequence is SCRSQTKLIFEIGFFRNRM. A helical transmembrane segment spans residues 873–893; that stretch reads FLYSVLGSLLGQLAVIYAPPL. Topologically, residues 894–903 are extracellular; sequence QKVFQTENLS. The chain crosses the membrane as a helical span at residues 904 to 924; the sequence is ALDLLLLTGLASSVFILSELL. The Cytoplasmic segment spans residues 925–944; sequence KLWEKFLSRARPTQMLPEAV.

Belongs to the cation transport ATPase (P-type) (TC 3.A.3) family. Type IIA subfamily. As to quaternary structure, interacts (via N-terminus) with ORAI1 (via N- and C-termini); this interaction regulates Ca(2+) influx at the plasma membrane. As to expression, expressed in hippocampal neurons (at protein level). Expressed in lactating mammary epithelium (at protein level).

It localises to the golgi apparatus. It is found in the trans-Golgi network membrane. The protein localises to the cell membrane. The protein resides in the basolateral cell membrane. The catalysed reaction is Ca(2+)(in) + ATP + H2O = Ca(2+)(out) + ADP + phosphate + H(+). It carries out the reaction Mn(2+)(in) + ATP + H2O = Mn(2+)(out) + ADP + phosphate + H(+). Its function is as follows. ATP-driven pump that supplies the Golgi apparatus with Ca(2+) and Mn(2+) ions, both essential cofactors for processing and trafficking of newly synthesized proteins in the secretory pathway. Within a catalytic cycle, acquires Ca(2+) or Mn(2+) ions on the cytoplasmic side of the membrane and delivers them to the lumenal side. The transfer of ions across the membrane is coupled to ATP hydrolysis and is associated with a transient phosphorylation that shifts the pump conformation from inward-facing to outward-facing state. Induces Ca(2+) influx independently of its ATP-driven pump function. At the basolateral membrane of mammary epithelial cells, interacts with Ca(2+) channel ORAI1 and mediates Ca(2+) entry independently of the Ca(2+) content of endoplasmic reticulum or Golgi stores. May facilitate transepithelial transport of large quantities of Ca(2+) for milk secretion via activation of Ca(2+) influx channels at the plasma membrane and active Ca(2+) transport at the Golgi apparatus. The sequence is that of Calcium-transporting ATPase type 2C member 2 from Mus musculus (Mouse).